A 756-amino-acid polypeptide reads, in one-letter code: MSVQSNSNSSGSLDGAPSCSQFSTGSPTPGSVSPLDIFAPRRHKEGMDELHSLDPRRQELLEARFIGAVSGNTGGSTGSASGGPKGLNNNECSSHSFGSLGSSSDKESETPEKKHFESSRGRKRKVDNQSESSQGKSSGRGPKISDYFDFQGGNGSSPVRGLPSVLRSPQNSHSAPGAIVRQNSSSPTSLCFMDHTMNLKQLSSRSVQTDLTLLKLAALESNKNLDLEKKEGRIDDLLRANCDLRRQIDEQQKLLERFKERLNKCTTMSKKLLIEKSTQEKQSCREKSMQDRLRLGHFTTVRHGASYSEQWTDGYAFQNLVKQQEWINQQREEIERQRKLLAKRKPSSTPSSQSPTPNESKQRKTKAVNGADNDPFLKPSLPTLLTVAEYHEQEEIFKLRLGHLKKEEAEIQAELERLERVRNLHIRELKRINNEDSSQFKDHPTLNERYLLLHLLGRGGFSEVYKAFDLFEQRYAAVKIHQLNKNWREEKKENYHKHACREYRIHKQLDHPRIVKLYDYFSLDTDTFCTVLEFCEGNDLDFYLKQHKLMSEKEARSIVMQIVNALRYLNEIKPSIIHYDLKPGNILLVDGTACGEIKITDFGLSKIMDDDSYGVDGMDLTSQGAGTYWYLPPECFVVGKEPPKISNKVDVWSVGVIFFQCLYGRKPFGHNQSQQDILQENTILKATEVQFPAKPVASNEAKAFIRRCLAYRKEDRSDVHQLGSDSYLLPHMRRSNSSGNLQATPASPAPSGIISY.

Composition is skewed to low complexity over residues 1–12 (MSVQSNSNSSGS) and 23–34 (STGSPTPGSVSP). Disordered regions lie at residues 1 to 56 (MSVQ…LDPR) and 69 to 185 (VSGN…QNSS). Residues 45–56 (EGMDELHSLDPR) show a composition bias toward basic and acidic residues. The span at 72–85 (NTGGSTGSASGGPK) shows a compositional bias: gly residues. Low complexity predominate over residues 93-103 (SSHSFGSLGSS). Positions 104-120 (SDKESETPEKKHFESSR) are enriched in basic and acidic residues. A coiled-coil region spans residues 243–268 (DLRRQIDEQQKLLERFKERLNKCTTM). The disordered stretch occupies residues 339–375 (KLLAKRKPSSTPSSQSPTPNESKQRKTKAVNGADNDP). The segment covering 347-357 (SSTPSSQSPTP) has biased composition (low complexity). Positions 397–435 (FKLRLGHLKKEEAEIQAELERLERVRNLHIRELKRINNE) form a coiled coil. Positions 450 to 728 (YLLLHLLGRG…VHQLGSDSYL (279 aa)) constitute a Protein kinase domain. ATP-binding positions include 456-464 (LGRGGFSEV) and Lys-479. Asp-580 serves as the catalytic Proton acceptor. Residues 734 to 756 (RSNSSGNLQATPASPAPSGIISY) are disordered. The span at 735-745 (SNSSGNLQATP) shows a compositional bias: polar residues.

It belongs to the protein kinase superfamily. Ser/Thr protein kinase family. Requires Mg(2+) as cofactor.

The protein localises to the nucleus. It catalyses the reaction L-seryl-[protein] + ATP = O-phospho-L-seryl-[protein] + ADP + H(+). It carries out the reaction L-threonyl-[protein] + ATP = O-phospho-L-threonyl-[protein] + ADP + H(+). The polypeptide is Serine/threonine-protein kinase tousled-like 1-B (tlk1b) (Danio rerio (Zebrafish)).